The chain runs to 248 residues: Pyridoxine 5'-phosphate synthase (248 aa).

Position 12 (asparagine 12) interacts with 3-amino-2-oxopropyl phosphate. 14–15 is a 1-deoxy-D-xylulose 5-phosphate binding site; it reads DH. Arginine 23 provides a ligand contact to 3-amino-2-oxopropyl phosphate. Catalysis depends on histidine 48, which acts as the Proton acceptor. Positions 50 and 55 each coordinate 1-deoxy-D-xylulose 5-phosphate. Residue glutamate 75 is the Proton acceptor of the active site. Threonine 105 provides a ligand contact to 1-deoxy-D-xylulose 5-phosphate. Histidine 196 functions as the Proton donor in the catalytic mechanism. 3-amino-2-oxopropyl phosphate contacts are provided by residues glycine 197 and 218 to 219; that span reads GH.

This sequence belongs to the PNP synthase family. In terms of assembly, homooctamer; tetramer of dimers.

It localises to the cytoplasm. It carries out the reaction 3-amino-2-oxopropyl phosphate + 1-deoxy-D-xylulose 5-phosphate = pyridoxine 5'-phosphate + phosphate + 2 H2O + H(+). It functions in the pathway cofactor biosynthesis; pyridoxine 5'-phosphate biosynthesis; pyridoxine 5'-phosphate from D-erythrose 4-phosphate: step 5/5. In terms of biological role, catalyzes the complicated ring closure reaction between the two acyclic compounds 1-deoxy-D-xylulose-5-phosphate (DXP) and 3-amino-2-oxopropyl phosphate (1-amino-acetone-3-phosphate or AAP) to form pyridoxine 5'-phosphate (PNP) and inorganic phosphate. In Azotobacter vinelandii (strain DJ / ATCC BAA-1303), this protein is Pyridoxine 5'-phosphate synthase.